The following is a 358-amino-acid chain: Membrane-bound lytic murein transglycosylase C (358 aa).

The N-terminal stretch at M1–S16 is a signal peptide. C17 carries the N-palmitoyl cysteine lipid modification. The S-diacylglycerol cysteine moiety is linked to residue C17.

Belongs to the transglycosylase Slt family.

Its subcellular location is the cell outer membrane. It carries out the reaction Exolytic cleavage of the (1-&gt;4)-beta-glycosidic linkage between N-acetylmuramic acid (MurNAc) and N-acetylglucosamine (GlcNAc) residues in peptidoglycan, from either the reducing or the non-reducing ends of the peptidoglycan chains, with concomitant formation of a 1,6-anhydrobond in the MurNAc residue.. Functionally, murein-degrading enzyme. May play a role in recycling of muropeptides during cell elongation and/or cell division. This Yersinia pseudotuberculosis serotype O:1b (strain IP 31758) protein is Membrane-bound lytic murein transglycosylase C.